Here is a 114-residue protein sequence, read N- to C-terminus: Gas vesicle protein J (114 aa).

Residues Pro63 to Glu114 are disordered. The span at Asp80 to Ser91 shows a compositional bias: basic and acidic residues. Polar residues predominate over residues Ser104–Glu114.

Belongs to the gas vesicle GvpA family. GvpF to GvpM interact with each other in vitro, and may form multi-subunit complex(es). Interacts with GvpA.

It is found in the gas vesicle. A minor component of the gas vesicle, proteins GvpF to GvpM might be involved in nucleating gas vesicle formation. Gas vesicles are hollow, gas filled proteinaceous nanostructures found in some microorganisms. They allow positioning of halobacteria at the optimal depth for growth in the poorly aerated, shallow brine pools of their habitat. Functionally, expression of a 9.5 kb mc-vac DNA fragment containing 2 divergently transcribed regions (gvpD-gvpE-gvpF-gvpG-gvpH-gvpI-gvpJ-gvpK-gvpL-gvpM and gvpA-gvpC-gvpN-gvpO) allows H.volcanii to produce gas vesicles. The chain is Gas vesicle protein J from Haloferax mediterranei (strain ATCC 33500 / DSM 1411 / JCM 8866 / NBRC 14739 / NCIMB 2177 / R-4) (Halobacterium mediterranei).